We begin with the raw amino-acid sequence, 97 residues long: Large ribosomal subunit protein bL28 (97 aa).

This sequence belongs to the bacterial ribosomal protein bL28 family.

The sequence is that of Large ribosomal subunit protein bL28 from Rickettsia akari (strain Hartford).